We begin with the raw amino-acid sequence, 472 residues long: GTPase Der (472 aa).

2 EngA-type G domains span residues P3–N166 and I188–T361. GTP-binding positions include G9–S16, D56–I60, N118–D121, G194–S201, D241–L245, and N306–D309. Residues K362–A446 form the KH-like domain.

The protein belongs to the TRAFAC class TrmE-Era-EngA-EngB-Septin-like GTPase superfamily. EngA (Der) GTPase family. As to quaternary structure, associates with the 50S ribosomal subunit.

GTPase that plays an essential role in the late steps of ribosome biogenesis. In Baumannia cicadellinicola subsp. Homalodisca coagulata, this protein is GTPase Der.